Consider the following 263-residue polypeptide: Glutamate 5-kinase (263 aa).

ATP is bound at residue Lys14. Residues Ser52, Asp137, and Asn149 each contribute to the substrate site. Residues 169–170 (SD) and 211–217 (TGGIVTK) contribute to the ATP site.

It belongs to the glutamate 5-kinase family. As to quaternary structure, homotetramer; oligomerization is not affected by L-proline feedback inhibition. Requires Mg(2+) as cofactor.

It catalyses the reaction L-glutamate + ATP = L-glutamyl 5-phosphate + ADP. It functions in the pathway amino-acid biosynthesis; L-proline biosynthesis; L-glutamate 5-semialdehyde from L-glutamate: step 1/2. Inhibited by L-proline as part of a negative feedback loop. Also inhibited by L-proline analogs 3,4-dehydro-L-proline, L-azetidine-2-carboxylic acid and L-4-thiazolidine carboxylic acid. Its function is as follows. Catalyzes the transfer of a phosphate group to glutamate to form L-glutamate 5-phosphate. May be important for growth and survival. This chain is Glutamate 5-kinase, found in Leishmania donovani.